The chain runs to 312 residues: Src-like-adapter (312 aa).

The tract at residues 1 to 33 is disordered; that stretch reads MLCRLPGPSTSRGEKEMGNSMKSTPAPLERPLS. An SH3 domain is found at 38–98; sequence LESDFLAVLN…PGICVARVYH (61 aa). Residues 100–191 form the SH2 domain; it reads WLFEGLGRDK…GLCCVLTTPC (92 aa). The segment at 206–312 is SLA C-terminal; it reads CTSPGSPVTL…TQKTKALTAT (107 aa). Residue Ser-274 is modified to Phosphoserine.

As to quaternary structure, homodimer. Interacts with phosphorylated CBL, SYK and LAT. Homodimerization and interaction with phosphorylated CBL occurs via its C-terminal domain. Interacts with PDGFRB and EPHA2. Interacts with phosphorylated proteins ZAP70; CD3Z; VAV1 and LCP2 via its SH2 domain. Phosphorylated.

Its subcellular location is the cytoplasm. The protein resides in the endosome. Adapter protein, which negatively regulates T-cell receptor (TCR) signaling. Inhibits T-cell antigen-receptor induced activation of nuclear factor of activated T-cells. Involved in the negative regulation of positive selection and mitosis of T-cells. May act by linking signaling proteins such as ZAP70 with CBL, leading to a CBL dependent degradation of signaling proteins. The chain is Src-like-adapter (Sla) from Rattus norvegicus (Rat).